The sequence spans 103 residues: Large ribosomal subunit protein bL21 (103 aa).

Belongs to the bacterial ribosomal protein bL21 family. In terms of assembly, part of the 50S ribosomal subunit. Contacts protein L20.

Its function is as follows. This protein binds to 23S rRNA in the presence of protein L20. The chain is Large ribosomal subunit protein bL21 from Nautilia profundicola (strain ATCC BAA-1463 / DSM 18972 / AmH).